A 199-amino-acid polypeptide reads, in one-letter code: Ribonuclease P protein component 3 (199 aa).

The protein belongs to the eukaryotic/archaeal RNase P protein component 3 family. As to quaternary structure, consists of a catalytic RNA component and at least 4-5 protein subunits.

The protein localises to the cytoplasm. It catalyses the reaction Endonucleolytic cleavage of RNA, removing 5'-extranucleotides from tRNA precursor.. Part of ribonuclease P, a protein complex that generates mature tRNA molecules by cleaving their 5'-ends. The chain is Ribonuclease P protein component 3 from Archaeoglobus fulgidus (strain ATCC 49558 / DSM 4304 / JCM 9628 / NBRC 100126 / VC-16).